A 391-amino-acid polypeptide reads, in one-letter code: GTPase Obg (391 aa).

The region spanning 1–159 is the Obg domain; it reads MKFIDEALIR…RDLQLELMLL (159 aa). Residues 160-333 enclose the OBG-type G domain; the sequence is ADVGMLGLPN…LTRDIMDFIE (174 aa). Residues 166–173, 191–195, 213–216, 283–286, and 314–316 contribute to the GTP site; these read GLPNAGKS, FTTLV, DIPG, NKID, and SAA. Residues Ser-173 and Thr-193 each contribute to the Mg(2+) site. The tract at residues 361–391 is disordered; it reads QNPITEDDWDDLDDDGWTEEDDEGVEFIYKP. Positions 365 to 385 are enriched in acidic residues; sequence TEDDWDDLDDDGWTEEDDEGV.

The protein belongs to the TRAFAC class OBG-HflX-like GTPase superfamily. OBG GTPase family. Monomer. Mg(2+) is required as a cofactor.

The protein resides in the cytoplasm. An essential GTPase which binds GTP, GDP and possibly (p)ppGpp with moderate affinity, with high nucleotide exchange rates and a fairly low GTP hydrolysis rate. Plays a role in control of the cell cycle, stress response, ribosome biogenesis and in those bacteria that undergo differentiation, in morphogenesis control. The polypeptide is GTPase Obg (Glaesserella parasuis serovar 5 (strain SH0165) (Haemophilus parasuis)).